Here is a 224-residue protein sequence, read N- to C-terminus: uncharacterized protein (224 aa).

The N-terminal stretch at 1-19 is a signal peptide; it reads MLRHITFTVFITTSMNTLA.

Belongs to the periplasmic pilus chaperone family.

It localises to the periplasm. Functionally, could be required for the biogenesis of a putative fimbria. This is an uncharacterized protein from Escherichia coli (strain K12).